We begin with the raw amino-acid sequence, 171 residues long: Adenine phosphoribosyltransferase (171 aa).

Belongs to the purine/pyrimidine phosphoribosyltransferase family. As to quaternary structure, homodimer.

The protein resides in the cytoplasm. The catalysed reaction is AMP + diphosphate = 5-phospho-alpha-D-ribose 1-diphosphate + adenine. It participates in purine metabolism; AMP biosynthesis via salvage pathway; AMP from adenine: step 1/1. Catalyzes a salvage reaction resulting in the formation of AMP, that is energically less costly than de novo synthesis. The protein is Adenine phosphoribosyltransferase of Geobacter metallireducens (strain ATCC 53774 / DSM 7210 / GS-15).